The sequence spans 940 residues: Protein translocase subunit SecA (940 aa).

ATP contacts are provided by residues Q85, G103 to T107, and D505. A disordered region spans residues P851 to K940. The span at G855–G865 shows a compositional bias: basic and acidic residues. Over residues R928–K940 the composition is skewed to basic residues.

It belongs to the SecA family. As to quaternary structure, monomer and homodimer. Part of the essential Sec protein translocation apparatus which comprises SecA, SecYEG and auxiliary proteins SecDF. Other proteins may also be involved.

The protein localises to the cell membrane. It is found in the cytoplasm. The enzyme catalyses ATP + H2O + cellular proteinSide 1 = ADP + phosphate + cellular proteinSide 2.. Its function is as follows. Part of the Sec protein translocase complex. Interacts with the SecYEG preprotein conducting channel. Has a central role in coupling the hydrolysis of ATP to the transfer of proteins into and across the cell membrane, serving as an ATP-driven molecular motor driving the stepwise translocation of polypeptide chains across the membrane. The sequence is that of Protein translocase subunit SecA from Streptomyces griseus.